A 67-amino-acid polypeptide reads, in one-letter code: Disintegrin EC3A (67 aa).

Residues 1–65 (NSVHPCCDPV…DCPRNRYKGK (65 aa)) form the Disintegrin domain. 4 disulfide bridges follow: cysteine 6–cysteine 29, cysteine 20–cysteine 26, cysteine 25–cysteine 50, and cysteine 38–cysteine 57. A Cell attachment site; atypical (VGD) motif is present at residues 42–44 (VGD).

Belongs to the venom metalloproteinase (M12B) family. P-II subfamily. P-IIe sub-subfamily. Heterodimer with EC3B; disulfide-linked. As to expression, expressed by the venom gland.

It is found in the secreted. Functionally, inhibits adhesion of cells expressing alpha-4/beta-1 (ITGA4/ITGB1) and alpha-4/beta-7 (ITGA4/ITGB7) integrins to the natural ligands vascular cell adhesion molecule 1 (VCAM-1) and mucosal addressin cell adhesion molecule 1 (MADCAM-1). It is also a weaker inhibitor of alpha-5/beta-1 (ITGA5/ITGB1) and alpha-2b/beta-3 (ITGA2B/ITGB3) integrins. The inhibitory activity of EC3 towards alpha-4 integrins is associated with the MLD sequence of EC3B subunit. The ability of EC3 to inhibit ITGA5/ITGB1 resides in both subunits A and B. This chain is Disintegrin EC3A, found in Echis carinatus (Saw-scaled viper).